The primary structure comprises 194 residues: UPF0215 protein DR_A0167 (194 aa).

It belongs to the UPF0215 family.

The chain is UPF0215 protein DR_A0167 from Deinococcus radiodurans (strain ATCC 13939 / DSM 20539 / JCM 16871 / CCUG 27074 / LMG 4051 / NBRC 15346 / NCIMB 9279 / VKM B-1422 / R1).